The primary structure comprises 647 residues: Zinc finger protein 567 (647 aa).

The region spanning 32-77 (MDVMLENYCHLISVGCHMTKPDVILKLERGEEPWTSFKGHTCLEEN) is the KRAB domain. Residues Lys173, Lys202, and Lys217 each participate in a glycyl lysine isopeptide (Lys-Gly) (interchain with G-Cter in SUMO2) cross-link. Residues 210-232 (FEYNDCEKAFLKRGGPVTHSRTY) form a C2H2-type 1; degenerate zinc finger. C2H2-type zinc fingers lie at residues 253–275 (HTCT…QGIH), 281–303 (YQCH…QRTH), 309–331 (FVCN…QRTH), 337–359 (YECP…QRTH), 365–387 (YECS…QRIH), 393–415 (YICK…QRTH), and 421–443 (YICN…EKTH). A Glycyl lysine isopeptide (Lys-Gly) (interchain with G-Cter in SUMO2) cross-link involves residue Lys447. 7 C2H2-type zinc fingers span residues 449 to 471 (YICN…QRTH), 477 to 499 (YECP…HRTH), 505 to 527 (YECN…QRIH), 533 to 555 (YICN…QKIH), 561 to 583 (YECP…QRTH), 589 to 611 (YKCS…QRTH), and 617 to 639 (YICN…QRTH).

Belongs to the krueppel C2H2-type zinc-finger protein family.

The protein resides in the nucleus. Functionally, may be involved in transcriptional regulation. This chain is Zinc finger protein 567 (ZNF567), found in Bos taurus (Bovine).